Consider the following 1059-residue polypeptide: MKEVTGSYNPRELEAGVQDTWKRENTYARVQEVRKDGKAFFFVDGPPYTTGHIHLGTAWNKIIKDTILRYHRMGGRNIIERAGYDMHGLPIEVKVEHQLGFTSKKDIEDYGIAAFIEQCRTFAVTHMEIMSEQFRQLGIWLDFDDPYQTIKAEYIESAWWAVQRAEERGLLERGHRVVNWCPRCETAIADSEVEYWDETDPSIFVKFPVTGRENEYLVIWTTTPWTLPANVAVAVSPAFTYARVAAKKDGSEEILWIADELVESVLKMGRYQDYTVLERVNGSDLVGTEYESPLAGQVPHQAEIRHRVVAADYVALENTGLVHIAPGHGWDDYLIGIQEGLEAFCPVDAGGCFTREAGAFADMYVRDANDLVIDALGDYLLARRTITHRYGHCWRCKTSIIYRATAQWFLKATEIREPMLQEIAKVKWYPEWAGSARFHDFVRDSRDWCISRQRYWGIPIPIWQCEQCGERTVIGTIAELEERSGARVPDPHRPYVDEVVIPCSCGGEMHRVADIFDVWFDSAVASWATLGFPREREAFDRLWPADFITEGQDQTRGWFYSQLGASTVAFGRAPYKSVLMHGFALDADGRKMSKSFGNVVTPEEVMNQFGVDVLRFYVLWANAPWDDLKFNWDSVKTIHRTLNILWNVYRFPLPYMVLDSFEPAAGDGGLWDGSFVRGNINDMPEEDRWIISRVNSLARTTAGDMQEYHLHRVTRALAAFILEDLSRWYVQLVRPRMWLEEDSPEKRYAYETVYYVMRRLVALLAPFTPHIAEEIYGNLRLAGDPESVHMLDWPEADDLLIAPDLESAMEVVRSFDDAVATARQNGRRKLRWPVAETVVVTGSDGVKTALEDLNDLALNRANSRTVRVVTGRWDRILWQAEPVMRAIGPEFGKEGPKVKALIEGADGTALKAAIERDGKAELGGYEIAERHVTFAEALPEGVFAAPMKDATVYVDVTLTPALEAEGYAREVIRRIQEMRRQLDLNVDDFIVAAVDVADDRVASLIAEEEWQKEIAGEVRAAALTVRRTDGERPTETFALEKDWDVEGVQMQIGISRAGE.

The 'HIGH' region motif lies at 47–57; the sequence is PYTTGHIHLGT. The 'KMSKS' region motif lies at 591 to 595; the sequence is KMSKS. ATP is bound at residue Lys594.

The protein belongs to the class-I aminoacyl-tRNA synthetase family. IleS type 2 subfamily. In terms of assembly, monomer. The cofactor is Zn(2+).

The protein localises to the cytoplasm. It carries out the reaction tRNA(Ile) + L-isoleucine + ATP = L-isoleucyl-tRNA(Ile) + AMP + diphosphate. In terms of biological role, catalyzes the attachment of isoleucine to tRNA(Ile). As IleRS can inadvertently accommodate and process structurally similar amino acids such as valine, to avoid such errors it has two additional distinct tRNA(Ile)-dependent editing activities. One activity is designated as 'pretransfer' editing and involves the hydrolysis of activated Val-AMP. The other activity is designated 'posttransfer' editing and involves deacylation of mischarged Val-tRNA(Ile). In Methanoculleus marisnigri (strain ATCC 35101 / DSM 1498 / JR1), this protein is Isoleucine--tRNA ligase.